The following is a 392-amino-acid chain: Casein kinase II subunit alpha (392 aa).

One can recognise a Protein kinase domain in the interval 39–324 (YQLVRKLGRG…AREAMDHPYF (286 aa)). Residues 45 to 53 (LGRGKYSEV) and Lys-68 contribute to the ATP site. Asp-156 acts as the Proton acceptor in catalysis. Residues 334-355 (MGGSNMPSGSSTPVSSASMMSG) form a disordered region. Residues 337–354 (SNMPSGSSTPVSSASMMS) show a composition bias toward low complexity.

This sequence belongs to the protein kinase superfamily. Ser/Thr protein kinase family. CK2 subfamily. In terms of assembly, tetramer composed of an alpha chain, an alpha' and two beta chains.

It is found in the nucleus. The enzyme catalyses L-seryl-[protein] + ATP = O-phospho-L-seryl-[protein] + ADP + H(+). It carries out the reaction L-threonyl-[protein] + ATP = O-phospho-L-threonyl-[protein] + ADP + H(+). Functionally, catalytic subunit of a constitutively active serine/threonine-protein kinase complex that phosphorylates a large number of substrates containing acidic residues C-terminal to the phosphorylated serine or threonine. Regulates numerous cellular processes, such as cell cycle progression, apoptosis and transcription, as well as viral infection. May act as a regulatory node which integrates and coordinates numerous signals leading to an appropriate cellular response. During mitosis, functions as a component of the p53/TP53-dependent spindle assembly checkpoint (SAC) that maintains cyclin-B-CDK1 activity and G2 arrest in response to spindle damage. Can also negatively regulate apoptosis. Phosphorylates the caspases CASP9 and CASP2 and the apoptotic regulator NOL3. Phosphorylation protects CASP9 from cleavage and activation by CASP8, and inhibits the dimerization of CASP2 and activation of CASP8. Plays an important role in the circadian clock function by phosphorylating BMAL1. This Xenopus laevis (African clawed frog) protein is Casein kinase II subunit alpha (csnk2a1).